Here is a 1683-residue protein sequence, read N- to C-terminus: E3 ubiquitin-protein ligase SHPRH (1683 aa).

The disordered stretch occupies residues 1–43 (MSSRRKRAPPVRVDEEKRQQLHWNMHEDRRNEPIIISDDDEQP). Over residues 12-32 (RVDEEKRQQLHWNMHEDRRNE) the composition is skewed to basic and acidic residues. At Ser266 the chain carries Phosphoserine. The Helicase ATP-binding; first part domain maps to 307–389 (YQREAVNWML…TVEVLALILT (83 aa)). An ATP-binding site is contributed by 373–380 (DEMGLGKT). Residues 438–512 (QCPPTRVMIL…GFSGTFTLGK (75 aa)) form the H15 domain. Residues 525 to 607 (KQAVGSPRKI…QGHCPATSDS (83 aa)) are disordered. The segment covering 534–547 (IQKETRKSGNKDTD) has biased composition (basic and acidic residues). A compositionally biased stretch (basic residues) spans 568–588 (KSRRNRSKLRKKLVPSTKKGK). The residue at position 635 (Ser635) is a Phosphoserine. The PHD-type zinc finger occupies 658 to 709 (RFECICGELDQIDRKPRVQCLKCHLWQHAKCVNYDEKNLKIKPFYCPHCLVA). Positions 710-868 (MEPVSTRATL…FGLVVFLGIE (159 aa)) constitute a Helicase ATP-binding; second part domain. The DEAQ box signature appears at 819 to 822 (DEAQ). The segment at 1432 to 1479 (CPICARQLGKQWAVLTCGHCFCNECISIIIEQYSVGSHRSSIKCAICR) adopts an RING-type zinc-finger fold. Residues 1514 to 1672 (AVVRTLMKIQ…ASVLTVADLA (159 aa)) enclose the Helicase C-terminal domain.

The protein belongs to the SNF2/RAD54 helicase family. As to quaternary structure, homodimer. Interacts with HLTF, PCNA, UBE2N and RAD18. As to expression, broadly expressed.

It catalyses the reaction S-ubiquitinyl-[E2 ubiquitin-conjugating enzyme]-L-cysteine + [acceptor protein]-L-lysine = [E2 ubiquitin-conjugating enzyme]-L-cysteine + N(6)-ubiquitinyl-[acceptor protein]-L-lysine.. Its pathway is protein modification; protein ubiquitination. In terms of biological role, E3 ubiquitin-protein ligase involved in DNA repair. Upon genotoxic stress, accepts ubiquitin from the UBE2N-UBE2V2 E2 complex and transfers it to 'Lys-164' of PCNA which had been monoubiquitinated by UBE2A/B-RAD18, promoting the formation of non-canonical poly-ubiquitin chains linked through 'Lys-63'. This Homo sapiens (Human) protein is E3 ubiquitin-protein ligase SHPRH (SHPRH).